A 539-amino-acid chain; its full sequence is Chaperonin GroEL (539 aa).

ATP contacts are provided by residues 29–32 (TLGP), 86–90 (DGTTT), Gly-413, and Asp-492.

The protein belongs to the chaperonin (HSP60) family. Forms a cylinder of 14 subunits composed of two heptameric rings stacked back-to-back. Interacts with the co-chaperonin GroES.

It localises to the cytoplasm. It carries out the reaction ATP + H2O + a folded polypeptide = ADP + phosphate + an unfolded polypeptide.. Together with its co-chaperonin GroES, plays an essential role in assisting protein folding. The GroEL-GroES system forms a nano-cage that allows encapsulation of the non-native substrate proteins and provides a physical environment optimized to promote and accelerate protein folding. The sequence is that of Chaperonin GroEL from Fusobacterium nucleatum subsp. polymorphum (Fusobacterium polymorphum).